Here is a 425-residue protein sequence, read N- to C-terminus: Serine--tRNA ligase 2 (425 aa).

234–236 (TAE) lines the L-serine pocket. Residue 265–267 (RVE) participates in ATP binding. Glu288 contributes to the L-serine binding site. Residue 352-355 (EVSS) participates in ATP binding. Ser388 provides a ligand contact to L-serine.

This sequence belongs to the class-II aminoacyl-tRNA synthetase family. Type-1 seryl-tRNA synthetase subfamily. Homodimer. The tRNA molecule binds across the dimer.

It is found in the cytoplasm. The enzyme catalyses tRNA(Ser) + L-serine + ATP = L-seryl-tRNA(Ser) + AMP + diphosphate + H(+). The catalysed reaction is tRNA(Sec) + L-serine + ATP = L-seryl-tRNA(Sec) + AMP + diphosphate + H(+). The protein operates within aminoacyl-tRNA biosynthesis; selenocysteinyl-tRNA(Sec) biosynthesis; L-seryl-tRNA(Sec) from L-serine and tRNA(Sec): step 1/1. Its function is as follows. Catalyzes the attachment of serine to tRNA(Ser). Is also able to aminoacylate tRNA(Sec) with serine, to form the misacylated tRNA L-seryl-tRNA(Sec), which will be further converted into selenocysteinyl-tRNA(Sec). In Clostridium acetobutylicum (strain ATCC 824 / DSM 792 / JCM 1419 / IAM 19013 / LMG 5710 / NBRC 13948 / NRRL B-527 / VKM B-1787 / 2291 / W), this protein is Serine--tRNA ligase 2.